Consider the following 349-residue polypeptide: Peroxidase C3 (349 aa).

Positions 1 to 29 (MGFSPLISCSAMGALILSCLLLQASNSNA) are cleaved as a signal peptide. Intrachain disulfides connect Cys40–Cys120, Cys73–Cys78, Cys126–Cys329, and Cys206–Cys238. His71 (proton acceptor) is an active-site residue. Ca(2+) contacts are provided by Asp72, Val75, Gly77, Asp79, and Ser81. Asn86 carries N-linked (GlcNAc...) asparagine glycosylation. Pro168 lines the substrate pocket. His199 contributes to the heme b binding site. Thr200 is a binding site for Ca(2+). 2 N-linked (GlcNAc...) asparagine glycosylation sites follow: Asn217 and Asn243. The Ca(2+) site is built by Asp251, Thr254, and Asp259.

This sequence belongs to the peroxidase family. Classical plant (class III) peroxidase subfamily. The cofactor is Ca(2+). Heme b is required as a cofactor.

The protein localises to the secreted. Its subcellular location is the vacuole. It carries out the reaction 2 a phenolic donor + H2O2 = 2 a phenolic radical donor + 2 H2O. Functionally, removal of H(2)O(2), oxidation of toxic reductants, biosynthesis and degradation of lignin, suberization, auxin catabolism, response to environmental stresses such as wounding, pathogen attack and oxidative stress. These functions might be dependent on each isozyme/isoform in each plant tissue. The protein is Peroxidase C3 (PRXC3) of Armoracia rusticana (Horseradish).